We begin with the raw amino-acid sequence, 426 residues long: Mothers against decapentaplegic homolog 7 (426 aa).

The tract at residues 13–55 is disordered; the sequence is LWRSRAPGGEDEEEGAGGGGGGGELRGEGATDSRAHGAGGGGP. The span at 37-47 shows a compositional bias: basic and acidic residues; sequence LRGEGATDSRA. 2 positions are modified to N6-acetyllysine; alternate: Lys64 and Lys70. Glycyl lysine isopeptide (Lys-Gly) (interchain with G-Cter in ubiquitin); alternate cross-links involve residues Lys64 and Lys70. Residues 64 to 207 enclose the MH1 domain; that stretch reads KAVRGAKGHH…LSRLCELESP (144 aa). Residues Cys125, Cys180, Cys192, and His197 each contribute to the Zn(2+) site. Positions 208 to 211 match the PY-motif motif; that stretch reads PPPY. The important for interaction with SMURF2 stretch occupies residues 208–217; sequence PPPYSRYPMD. A Phosphoserine modification is found at Ser249. An MH2 domain is found at 261–426; sequence WCVVAYWEEK…CWLEVIFNSR (166 aa).

The protein belongs to the dwarfin/SMAD family. As to quaternary structure, interacts with WWP1. Interacts with COPS5. Interacts with NEDD4L. Interacts with STAMBP. Interacts with RNF111, AXIN1 and AXIN2. Interacts with PPP1R15A. Interacts (via MH2 domain) with EP300. Interacts with ACVR1B, SMURF1, SMURF2 and TGFBR1; SMAD7 recruits SMURF1 and SMURF2 to the TGF-beta receptor and regulates its degradation. Interacts with PDPK1 (via PH domain). Interacts with TSC22D1/TSC-22; the interaction requires TGF-beta and the interaction is inhibited by TGFBR1. Post-translationally, phosphorylation on Ser-249 does not affect its stability, nuclear localization or inhibitory function in TGFB signaling; however it affects its ability to regulate transcription. Phosphorylated by PDPK1. Ubiquitinated by WWP1. Polyubiquitinated by RNF111, which is enhanced by AXIN1 and promotes proteasomal degradation. In response to TGF-beta, ubiquitinated by SMURF1; which promotes its degradation. In terms of processing, acetylation prevents ubiquitination and degradation mediated by SMURF1. Ubiquitous with higher expression in the lung and vascular endothelium.

It localises to the nucleus. The protein resides in the cytoplasm. Its function is as follows. Antagonist of signaling by TGF-beta (transforming growth factor) type 1 receptor superfamily members; has been shown to inhibit TGF-beta (Transforming growth factor) and activin signaling by associating with their receptors thus preventing SMAD2 access. Functions as an adapter to recruit SMURF2 to the TGF-beta receptor complex. Also acts by recruiting the PPP1R15A-PP1 complex to TGFBR1, which promotes its dephosphorylation. Positively regulates PDPK1 kinase activity by stimulating its dissociation from the 14-3-3 protein YWHAQ which acts as a negative regulator. This chain is Mothers against decapentaplegic homolog 7 (SMAD7), found in Homo sapiens (Human).